The chain runs to 361 residues: Chorismate synthase (361 aa).

NADP(+)-binding residues include R48 and R54. FMN contacts are provided by residues 125–127 (RSS), 238–239 (NA), G278, 293–297 (KPTSS), and R319.

This sequence belongs to the chorismate synthase family. In terms of assembly, homotetramer. FMNH2 is required as a cofactor.

The enzyme catalyses 5-O-(1-carboxyvinyl)-3-phosphoshikimate = chorismate + phosphate. It participates in metabolic intermediate biosynthesis; chorismate biosynthesis; chorismate from D-erythrose 4-phosphate and phosphoenolpyruvate: step 7/7. In terms of biological role, catalyzes the anti-1,4-elimination of the C-3 phosphate and the C-6 proR hydrogen from 5-enolpyruvylshikimate-3-phosphate (EPSP) to yield chorismate, which is the branch point compound that serves as the starting substrate for the three terminal pathways of aromatic amino acid biosynthesis. This reaction introduces a second double bond into the aromatic ring system. The polypeptide is Chorismate synthase (Sodalis glossinidius (strain morsitans)).